Here is a 166-residue protein sequence, read N- to C-terminus: NAD(P)H-quinone oxidoreductase subunit I, chloroplastic (166 aa).

4Fe-4S ferredoxin-type domains are found at residues Gly-55–Lys-84 and Leu-95–Glu-124. Positions 64, 67, 70, 74, 104, 107, 110, and 114 each coordinate [4Fe-4S] cluster.

Belongs to the complex I 23 kDa subunit family. In terms of assembly, NDH is composed of at least 16 different subunits, 5 of which are encoded in the nucleus. [4Fe-4S] cluster is required as a cofactor.

The protein resides in the plastid. It is found in the chloroplast thylakoid membrane. The catalysed reaction is a plastoquinone + NADH + (n+1) H(+)(in) = a plastoquinol + NAD(+) + n H(+)(out). It carries out the reaction a plastoquinone + NADPH + (n+1) H(+)(in) = a plastoquinol + NADP(+) + n H(+)(out). Functionally, NDH shuttles electrons from NAD(P)H:plastoquinone, via FMN and iron-sulfur (Fe-S) centers, to quinones in the photosynthetic chain and possibly in a chloroplast respiratory chain. The immediate electron acceptor for the enzyme in this species is believed to be plastoquinone. Couples the redox reaction to proton translocation, and thus conserves the redox energy in a proton gradient. This chain is NAD(P)H-quinone oxidoreductase subunit I, chloroplastic, found in Melampodium leucanthum (Black foot daisy).